Reading from the N-terminus, the 337-residue chain is Cytoskeleton protein RodZ (337 aa).

Topologically, residues 1 to 111 are cytoplasmic; that stretch reads MNTEATHDQN…LGKRRKKRDG (111 aa). Residues 19–71 enclose the HTH cro/C1-type domain; that stretch reads LRNAREQLGLSQQAVAERLCLKVSTVRDIEEDKAPADLASTFLRGYIRSYARL. A DNA-binding region (H-T-H motif) is located at residues 30 to 49; sequence QQAVAERLCLKVSTVRDIEE. A helical; Signal-anchor for type II membrane protein transmembrane segment spans residues 112–132; that stretch reads WLMTFTWLVLFVVIGLSGAWW. Topologically, residues 133-337 are periplasmic; the sequence is WQDRKAQQEE…TLNAEQSPAQ (205 aa). Polar residues predominate over residues 144-167; it reads TTMADQSSAELSSNSEQGQSVPLN. The tract at residues 144-235 is disordered; that stretch reads TTMADQSSAE…PTAATTPDGA (92 aa). Over residues 168–207 the composition is skewed to low complexity; it reads TSTTTDPATTSTPPASVDTTATNTQTPAVTAPAPAVDPQQ. Over residues 208–218 the composition is skewed to polar residues; it reads NAVVSPSQANV. The segment covering 219–235 has biased composition (low complexity); the sequence is DTAATPAPTAATTPDGA.

This sequence belongs to the RodZ family.

It localises to the cell inner membrane. In terms of biological role, cytoskeletal protein that is involved in cell-shape control through regulation of the length of the long axis. The sequence is that of Cytoskeleton protein RodZ from Escherichia coli (strain K12 / MC4100 / BW2952).